The chain runs to 255 residues: Proteasome subunit alpha (255 aa).

The interval 228–255 is disordered; the sequence is LLASPAGTSGPTGEPGPAGTAATDGGDL. A compositionally biased stretch (low complexity) spans 232–255; sequence PAGTSGPTGEPGPAGTAATDGGDL.

This sequence belongs to the peptidase T1A family. The 20S proteasome core is composed of 14 alpha and 14 beta subunits that assemble into four stacked heptameric rings, resulting in a barrel-shaped structure. The two inner rings, each composed of seven catalytic beta subunits, are sandwiched by two outer rings, each composed of seven alpha subunits. The catalytic chamber with the active sites is on the inside of the barrel. Has a gated structure, the ends of the cylinder being occluded by the N-termini of the alpha-subunits. Is capped by the proteasome-associated ATPase, ARC.

The protein resides in the cytoplasm. The protein operates within protein degradation; proteasomal Pup-dependent pathway. With respect to regulation, the formation of the proteasomal ATPase ARC-20S proteasome complex, likely via the docking of the C-termini of ARC into the intersubunit pockets in the alpha-rings, may trigger opening of the gate for substrate entry. Interconversion between the open-gate and close-gate conformations leads to a dynamic regulation of the 20S proteasome proteolysis activity. In terms of biological role, component of the proteasome core, a large protease complex with broad specificity involved in protein degradation. The polypeptide is Proteasome subunit alpha (Sanguibacter keddieii (strain ATCC 51767 / DSM 10542 / NCFB 3025 / ST-74)).